The primary structure comprises 92 residues: Small ribosomal subunit protein uS19c (92 aa).

Belongs to the universal ribosomal protein uS19 family.

Its subcellular location is the plastid. It localises to the chloroplast. Its function is as follows. Protein S19 forms a complex with S13 that binds strongly to the 16S ribosomal RNA. The protein is Small ribosomal subunit protein uS19c of Angiopteris evecta (Mule's foot fern).